A 266-amino-acid polypeptide reads, in one-letter code: Glutamate racemase (266 aa).

Residues 9–10 and 41–42 each bind substrate; these read DS and YG. Cys72 serves as the catalytic Proton donor/acceptor. 73–74 provides a ligand contact to substrate; the sequence is NT. The active-site Proton donor/acceptor is the Cys184. 185-186 contributes to the substrate binding site; the sequence is TH.

This sequence belongs to the aspartate/glutamate racemases family.

It carries out the reaction L-glutamate = D-glutamate. It functions in the pathway cell wall biogenesis; peptidoglycan biosynthesis. Its function is as follows. Provides the (R)-glutamate required for cell wall biosynthesis. In Staphylococcus haemolyticus (strain JCSC1435), this protein is Glutamate racemase.